We begin with the raw amino-acid sequence, 140 residues long: uncharacterized protein (140 aa).

The first 22 residues, 1-22 (MRLRWQTIVLLLLILGGASASA), serve as a signal peptide directing secretion.

This is an uncharacterized protein from Archaeoglobus fulgidus (strain ATCC 49558 / DSM 4304 / JCM 9628 / NBRC 100126 / VC-16).